We begin with the raw amino-acid sequence, 549 residues long: Neurofilament light polypeptide (549 aa).

The residue at position 2 (Ser-2) is an N-acetylserine. The segment at 2–92 (SSFYSEPYYS…KSIRTQEKAQ (91 aa)) is head. Residue Thr-21 is glycosylated (O-linked (GlcNAc) threonine). Arg-23 carries the asymmetric dimethylarginine; alternate modification. Arg-23 carries the omega-N-methylarginine; alternate modification. O-linked (GlcNAc) serine glycosylation is present at Ser-27. An Omega-N-methylarginine modification is found at Arg-30. Tyr-43 carries the phosphotyrosine modification. A phosphoserine mark is found at Ser-56, Ser-66, and Ser-102. The IF rod domain occupies 89 to 400 (EKAQLQDLND…KLLEGEETRL (312 aa)). A coil 1A region spans residues 93–124 (LQDLNDRFASFIERVHELEQQNKVLEAQLLVL). The segment at 125-137 (RQKHSEPSRFRAL) is linker 1. Positions 138 to 233 (YEQEIRDLRL…KVHEEEIAEL (96 aa)) are coil 1B. The interval 234 to 252 (QAQIQYAQISVEMDVSSKP) is linker 12. A coil 2A region spans residues 253–271 (DLSAALKDIRAQYEKLAAK). Positions 272-280 (NMQNAEEWF) are linker 2. The interval 281 to 396 (KSRFTVLTES…AAYRKLLEGE (116 aa)) is coil 2B. An epitope; recognized by IF-specific monoclonal antibody region spans residues 381–391 (ALDIEIAAYRK). The interval 397–443 (ETRLSFTSVGSLTTGYSQSSQVFGRSAYGGLQTSSYLMSTRSFPSYY) is tail, subdomain A. The segment at 397-549 (ETRLSFTSVG…GEEQATKKKD (153 aa)) is tail. The segment at 444-549 (TSHVQEEQIE…GEEQATKKKD (106 aa)) is tail, subdomain B (acidic). The disordered stretch occupies residues 462-549 (KAEEAKDEPP…GEEQATKKKD (88 aa)). The segment covering 471–534 (PSEGEAEEEG…ETKEAEEEEK (64 aa)) has biased composition (acidic residues). Ser-472 carries the phosphoserine modification. Thr-526 bears the Phosphothreonine mark. Over residues 535–549 (KDEGAGEEQATKKKD) the composition is skewed to basic and acidic residues.

The protein belongs to the intermediate filament family. As to quaternary structure, forms homodimers (in vitro). Forms heterodimers with NEFH or NEFM; which can further hetero-oligomerize (in vitro). Forms heterodimers with INA (in vitro). Interacts with ARHGEF28. Interacts with TRIM2. Post-translationally, O-glycosylated. In terms of processing, phosphorylated in the head and rod regions by the PKC kinase PKN1, leading to the inhibition of polymerization. Ubiquitinated in the presence of TRIM2 and UBE2D1.

It localises to the cell projection. It is found in the axon. The protein localises to the cytoplasm. Its subcellular location is the cytoskeleton. In terms of biological role, neurofilaments usually contain three intermediate filament proteins: NEFL, NEFM, and NEFH which are involved in the maintenance of neuronal caliber. May additionally cooperate with the neuronal intermediate filament proteins PRPH and INA to form neuronal filamentous networks. This is Neurofilament light polypeptide (NEFL) from Sus scrofa (Pig).